A 121-amino-acid polypeptide reads, in one-letter code: Large ribosomal subunit protein bL19 (121 aa).

Belongs to the bacterial ribosomal protein bL19 family.

This protein is located at the 30S-50S ribosomal subunit interface and may play a role in the structure and function of the aminoacyl-tRNA binding site. The chain is Large ribosomal subunit protein bL19 from Amoebophilus asiaticus (strain 5a2).